The chain runs to 609 residues: Elongation factor 4 (609 aa).

The tr-type G domain occupies 5-187 (SKIRNFSIIA…AIVAKIPPPE (183 aa)). GTP is bound by residues 17 to 22 (DHGKST) and 134 to 137 (NKID).

Belongs to the TRAFAC class translation factor GTPase superfamily. Classic translation factor GTPase family. LepA subfamily.

It localises to the cell inner membrane. The catalysed reaction is GTP + H2O = GDP + phosphate + H(+). In terms of biological role, required for accurate and efficient protein synthesis under certain stress conditions. May act as a fidelity factor of the translation reaction, by catalyzing a one-codon backward translocation of tRNAs on improperly translocated ribosomes. Back-translocation proceeds from a post-translocation (POST) complex to a pre-translocation (PRE) complex, thus giving elongation factor G a second chance to translocate the tRNAs correctly. Binds to ribosomes in a GTP-dependent manner. This Erythrobacter litoralis (strain HTCC2594) protein is Elongation factor 4.